Reading from the N-terminus, the 258-residue chain is Type III pantothenate kinase (258 aa).

6–13 lines the ATP pocket; that stretch reads DVGNTNTV. Residues Tyr100 and 107 to 110 each bind substrate; that span reads GADR. Asp109 (proton acceptor) is an active-site residue. Asp129 provides a ligand contact to K(+). Thr132 lines the ATP pocket. Thr184 provides a ligand contact to substrate.

Belongs to the type III pantothenate kinase family. Homodimer. Requires NH4(+) as cofactor. K(+) serves as cofactor.

The protein resides in the cytoplasm. It catalyses the reaction (R)-pantothenate + ATP = (R)-4'-phosphopantothenate + ADP + H(+). Its pathway is cofactor biosynthesis; coenzyme A biosynthesis; CoA from (R)-pantothenate: step 1/5. Functionally, catalyzes the phosphorylation of pantothenate (Pan), the first step in CoA biosynthesis. In Bacillus velezensis (strain DSM 23117 / BGSC 10A6 / LMG 26770 / FZB42) (Bacillus amyloliquefaciens subsp. plantarum), this protein is Type III pantothenate kinase.